Reading from the N-terminus, the 440-residue chain is 3-phosphoshikimate 1-carboxyvinyltransferase (440 aa).

Lysine 19, serine 20, and arginine 24 together coordinate 3-phosphoshikimate. Lysine 19 is a phosphoenolpyruvate binding site. 2 residues coordinate phosphoenolpyruvate: glycine 92 and arginine 121. Positions 166, 168, 315, and 342 each coordinate 3-phosphoshikimate. Glutamine 168 lines the phosphoenolpyruvate pocket. The active-site Proton acceptor is aspartate 315. Phosphoenolpyruvate is bound by residues arginine 346 and arginine 399.

This sequence belongs to the EPSP synthase family. In terms of assembly, monomer.

It is found in the cytoplasm. The enzyme catalyses 3-phosphoshikimate + phosphoenolpyruvate = 5-O-(1-carboxyvinyl)-3-phosphoshikimate + phosphate. The protein operates within metabolic intermediate biosynthesis; chorismate biosynthesis; chorismate from D-erythrose 4-phosphate and phosphoenolpyruvate: step 6/7. Its function is as follows. Catalyzes the transfer of the enolpyruvyl moiety of phosphoenolpyruvate (PEP) to the 5-hydroxyl of shikimate-3-phosphate (S3P) to produce enolpyruvyl shikimate-3-phosphate and inorganic phosphate. This chain is 3-phosphoshikimate 1-carboxyvinyltransferase, found in Leptospira interrogans serogroup Icterohaemorrhagiae serovar Lai (strain 56601).